The primary structure comprises 485 residues: MALKSSKAVSEEQHGYEFFGPPGAFAISFLLPVLVYVFNFVCNDISGCPAPSLLSPKTLSLDKLKQEVGWPQDGFAGLVSWEASAATAGYILLSLILYRVLPAHEVEGTELRSGGRLKYRLNTLYSSSFTLAILAAGTAAQGAEFPVWTFISDNFIQILTANTIFSYAVATFVYVRSFSVKPGNKENRELAAGGHTGNMLYDWFIGRELNPRVVIPLIGEVDLKEWLELRPGMMGWIIFNCSWCAQQYRNYGYVTDSSICITLVQAVYVFDSWWNEPAILTTMDITTDGFGMMLAFGDIVWVPFVYSLQTRYLAVHPVSLGPVGLAVMLSLIGLGFYIFRSANSEKNNFRTNPNDPKVSQLKYIQTKKGSKLLISGWWGIARHINYLGDWIQSWPYCLPTGLAGYQILNAGAQAEGALVMRDGREVVQGEAKGWGMLITYFYILYFAILLIHRERRDDDKCHRKYGEDWEKYRKIVRYRIIPGIY.

A run of 5 helical transmembrane segments spans residues 18–38 (FFGP…VYVF), 77–97 (GLVS…SLIL), 131–151 (LAIL…WTFI), 155–175 (FIQI…FVYV), and 319–339 (SLGP…FYIF). NADP(+)-binding positions include Lys346, Arg350, Leu373, Trp378, and 385–386 (NY). Residues 431-451 (AKGWGMLITYFYILYFAILLI) form a helical membrane-spanning segment. NADP(+)-binding positions include Asp457, 461 to 465 (CHRKY), and Tyr472.

Belongs to the ERG4/ERG24 family.

It localises to the membrane. The enzyme catalyses 4,4-dimethyl-5alpha-cholesta-8,24-dien-3beta-ol + NADP(+) = 4,4-dimethyl-5alpha-cholesta-8,14,24-trien-3beta-ol + NADPH + H(+). Its pathway is steroid biosynthesis; zymosterol biosynthesis; zymosterol from lanosterol: step 2/6. In terms of biological role, reduces the C14=C15 double bond of 4,4-dimethyl-cholesta-8,14,24-trienol to produce 4,4-dimethyl-cholesta-8,24-dienol. This Fusarium vanettenii (Neocosmospora pisi) protein is Delta(14)-sterol reductase.